Consider the following 111-residue polypeptide: WAP four-disulfide core domain protein 12 (111 aa).

A signal peptide spans 1 to 23; sequence MGSSSFLVLMVSLTLVTLVAAEG. Residues 27–74 enclose the WAP domain; the sequence is GIEKAGVCPADNVRCFKSDPPQCHTDQDCLGERKCCYLHCGFKCVIPV. 4 cysteine pairs are disulfide-bonded: cysteine 34/cysteine 62, cysteine 41/cysteine 66, cysteine 49/cysteine 61, and cysteine 55/cysteine 70. The tract at residues 80–111 is disordered; the sequence is GGNKDEDVSGPCPEPGWEAKSPGSSSTGCPQK. Polar residues predominate over residues 101–111; that stretch reads PGSSSTGCPQK.

The protein resides in the secreted. Its function is as follows. Antibacterial protein. Putative acid-stable proteinase inhibitor. The polypeptide is WAP four-disulfide core domain protein 12 (WFDC12) (Chlorocebus aethiops (Green monkey)).